Consider the following 387-residue polypeptide: Acetylserotonin O-methyltransferase (387 aa).

Residues Tyr153, Trp170, Glu216, 246-248, and Arg263 contribute to the S-adenosyl-L-methionine site; that span reads GDF. His266 serves as the catalytic Proton donor/acceptor. Substrate-binding residues include Asp267 and Gln317. The interval 354-387 is disordered; the sequence is AARGGGAGARSDGGGGDATSQTGSGTGSEVGAQD. Residues 356–370 show a composition bias toward gly residues; the sequence is RGGGAGARSDGGGGD.

This sequence belongs to the class I-like SAM-binding methyltransferase superfamily. Cation-independent O-methyltransferase family. As to quaternary structure, homodimer. Expressed predominantly in the pineal gland (at protein level). Very low expression, if any, in the retina.

It catalyses the reaction N-acetylserotonin + S-adenosyl-L-methionine = melatonin + S-adenosyl-L-homocysteine + H(+). It participates in aromatic compound metabolism; melatonin biosynthesis; melatonin from serotonin: step 1/2. In terms of biological role, catalyzes the transfer of a methyl group onto N-acetylserotonin, producing melatonin (N-acetyl-5-methoxytryptamine). This Mus musculus (Mouse) protein is Acetylserotonin O-methyltransferase (Asmt).